Reading from the N-terminus, the 500-residue chain is L-arabinose isomerase (500 aa).

4 residues coordinate Mn(2+): E306, E333, H349, and H448.

It belongs to the arabinose isomerase family. Requires Mn(2+) as cofactor.

It catalyses the reaction beta-L-arabinopyranose = L-ribulose. Its pathway is carbohydrate degradation; L-arabinose degradation via L-ribulose; D-xylulose 5-phosphate from L-arabinose (bacterial route): step 1/3. Its function is as follows. Catalyzes the conversion of L-arabinose to L-ribulose. The polypeptide is L-arabinose isomerase (Shewanella sp. (strain MR-7)).